The following is an 80-amino-acid chain: Protein FAM229B (80 aa).

Residues 1–44 form a disordered region; sequence MPFRFGTQPRRFPVEGGDSSIGLEPGLSSSAACNGKEMSPTRQL.

The protein belongs to the FAM229 family.

This chain is Protein FAM229B (FAM229B), found in Macaca fascicularis (Crab-eating macaque).